Here is a 218-residue protein sequence, read N- to C-terminus: Elongation factor Ts (218 aa).

The tract at residues 82-85 (TDFV) is involved in Mg(2+) ion dislocation from EF-Tu.

The protein belongs to the EF-Ts family.

The protein resides in the cytoplasm. In terms of biological role, associates with the EF-Tu.GDP complex and induces the exchange of GDP to GTP. It remains bound to the aminoacyl-tRNA.EF-Tu.GTP complex up to the GTP hydrolysis stage on the ribosome. The polypeptide is Elongation factor Ts (Prochlorococcus marinus (strain MIT 9303)).